The primary structure comprises 599 residues: CAP-Gly domain-containing linker protein 4 (599 aa).

ANK repeat units follow at residues 65 to 101 (TSVSELFAILRQWVPQVQQNIDIIGNEILKRGCNVND), 149 to 180 (TNMNALHYASYFDVPELIRVLLKTSKPKDVDA), and 186 to 215 (NFGTALHIAAHNLCAGAVKTLLELGANPAF). The CAP-Gly 1 domain maps to 303 to 345 (GTTEFASGQWAGIELDEPEGKNNGSVGRVQYFKCAPKYGIFAP). The segment at 387–482 (SGLMTSKKEN…TSAANNTHRE (96 aa)) is disordered. Positions 443-462 (LSTSSSSGKKTLSKSPSLPS) are enriched in low complexity. A compositionally biased stretch (polar residues) spans 468–478 (LKSSTTSAANN). Positions 505–547 (GTTNFAPGYWYGIELEKPHGKNDGSVGGVQYFSCSPRYGIFAP) constitute a CAP-Gly 2 domain. At serine 557 the chain carries Phosphoserine. The segment at 565-599 (SSNKQNHSYPGFRRSFSTTSASSQKEINRRNAFAK) is disordered. The segment covering 576 to 587 (FRRSFSTTSASS) has biased composition (low complexity).

The polypeptide is CAP-Gly domain-containing linker protein 4 (Clip4) (Rattus norvegicus (Rat)).